A 215-amino-acid chain; its full sequence is Short neuropeptide F (215 aa).

The first 22 residues, M1–S22, serve as a signal peptide directing secretion. A propeptide spanning residues E23 to K56 is cleaved from the precursor. Phenylalanine amide is present on residues F69 and F101. The residue at position 129 (W129) is a Tryptophan amide. Position 157 is a phenylalanine amide (F157). The propeptide occupies S160–K215. Residues D173–K215 form a disordered region.

The protein belongs to the NPY family.

It localises to the secreted. Functionally, plays a role in controlling food intake and regulating body size. This is Short neuropeptide F from Aedes aegypti (Yellowfever mosquito).